The chain runs to 27 residues: U1-poneritoxin-Na3b (27 aa).

Belongs to the ponericin-G family. Expressed by the venom gland.

The protein localises to the secreted. Shows a broad spectrum of activity against both Gram-positive and Gram-negative bacteria. Also has antimicrobial activity against S.cerevisiae. Has insecticidal and non-hemolytic activity. The chain is U1-poneritoxin-Na3b from Neoponera apicalis (Ant).